A 942-amino-acid polypeptide reads, in one-letter code: Leucine--tRNA ligase 2 (942 aa).

The 'HIGH' region signature appears at 35 to 45; the sequence is PYPNSPFHLGH. A 'KMSKS' region motif is present at residues 619-623; it reads KMSKS. K622 contacts ATP.

Belongs to the class-I aminoacyl-tRNA synthetase family.

The protein localises to the cytoplasm. It catalyses the reaction tRNA(Leu) + L-leucine + ATP = L-leucyl-tRNA(Leu) + AMP + diphosphate. In Sulfolobus acidocaldarius (strain ATCC 33909 / DSM 639 / JCM 8929 / NBRC 15157 / NCIMB 11770), this protein is Leucine--tRNA ligase 2.